The chain runs to 467 residues: UDP-glycosyltransferase 71D1 (467 aa).

His16 serves as the catalytic Proton acceptor. Residue His16 participates in an anthocyanidin binding. Asp122 (charge relay) is an active-site residue. Residues Thr144, Gln341, His356, Trp359, Asn360, Ser361, and Glu364 each coordinate UDP-alpha-D-glucose. Residue Ala379 participates in an anthocyanidin binding. UDP-alpha-D-glucose is bound by residues Glu380 and Gln381.

Belongs to the UDP-glycosyltransferase family.

It carries out the reaction a flavonol + UDP-alpha-D-glucose = a flavonol 3-O-beta-D-glucoside + UDP + H(+). Possesses quercetin 3-O-glucosyltransferase activity in vitro. This chain is UDP-glycosyltransferase 71D1 (UGT71D1), found in Arabidopsis thaliana (Mouse-ear cress).